A 355-amino-acid polypeptide reads, in one-letter code: Protein-glutamate methylesterase/protein-glutamine glutaminase (355 aa).

In terms of domain architecture, Response regulatory spans 3-121 (NVLVVEDSPV…HPDHEATARK (119 aa)). D54 bears the 4-aspartylphosphate mark. Residues 154 to 348 (PLLNRVAPAR…AALTNLVAER (195 aa)) enclose the CheB-type methylesterase domain. Residues S170, H197, and D290 contribute to the active site.

Belongs to the CheB family. Post-translationally, phosphorylated by CheA. Phosphorylation of the N-terminal regulatory domain activates the methylesterase activity.

The protein resides in the cytoplasm. The catalysed reaction is [protein]-L-glutamate 5-O-methyl ester + H2O = L-glutamyl-[protein] + methanol + H(+). The enzyme catalyses L-glutaminyl-[protein] + H2O = L-glutamyl-[protein] + NH4(+). Its function is as follows. Involved in chemotaxis. Part of a chemotaxis signal transduction system that modulates chemotaxis in response to various stimuli. Catalyzes the demethylation of specific methylglutamate residues introduced into the chemoreceptors (methyl-accepting chemotaxis proteins or MCP) by CheR. Also mediates the irreversible deamidation of specific glutamine residues to glutamic acid. This chain is Protein-glutamate methylesterase/protein-glutamine glutaminase, found in Nitrosospira multiformis (strain ATCC 25196 / NCIMB 11849 / C 71).